Here is a 284-residue protein sequence, read N- to C-terminus: D-tagatose-1,6-bisphosphate aldolase subunit GatY (284 aa).

Asp-82 (proton donor) is an active-site residue. Zn(2+)-binding residues include His-83 and His-180. A dihydroxyacetone phosphate-binding site is contributed by Gly-181. His-208 is a binding site for Zn(2+). Dihydroxyacetone phosphate is bound by residues 209–211 (GAS) and 230–233 (NVAT).

Belongs to the class II fructose-bisphosphate aldolase family. TagBP aldolase GatY subfamily. In terms of assembly, forms a complex with GatZ. The cofactor is Zn(2+).

It carries out the reaction D-tagatofuranose 1,6-bisphosphate = D-glyceraldehyde 3-phosphate + dihydroxyacetone phosphate. Its pathway is carbohydrate metabolism; D-tagatose 6-phosphate degradation; D-glyceraldehyde 3-phosphate and glycerone phosphate from D-tagatose 6-phosphate: step 2/2. Catalytic subunit of the tagatose-1,6-bisphosphate aldolase GatYZ, which catalyzes the reversible aldol condensation of dihydroxyacetone phosphate (DHAP or glycerone-phosphate) with glyceraldehyde 3-phosphate (G3P) to produce tagatose 1,6-bisphosphate (TBP). Requires GatZ subunit for full activity and stability. Is involved in the catabolism of galactitol. The protein is D-tagatose-1,6-bisphosphate aldolase subunit GatY of Shigella flexneri.